Here is a 194-residue protein sequence, read N- to C-terminus: Probable GTP-binding protein EngB (194 aa).

An EngB-type G domain is found at 23–194 (DKMEFAFVGR…LNFMEEKLNN (172 aa)). GTP contacts are provided by residues 31 to 38 (GRSNVGKS), 58 to 62 (GRTQL), 76 to 79 (DLPG), 142 to 145 (TKID), and 173 to 175 (HSS). Serine 38 and threonine 60 together coordinate Mg(2+).

It belongs to the TRAFAC class TrmE-Era-EngA-EngB-Septin-like GTPase superfamily. EngB GTPase family. The cofactor is Mg(2+).

Functionally, necessary for normal cell division and for the maintenance of normal septation. The sequence is that of Probable GTP-binding protein EngB from Fusobacterium nucleatum subsp. nucleatum (strain ATCC 25586 / DSM 15643 / BCRC 10681 / CIP 101130 / JCM 8532 / KCTC 2640 / LMG 13131 / VPI 4355).